Consider the following 391-residue polypeptide: MAFKRMTDIDLAGKRVLIREDFNVPVKDGRVTSDARIRAALPTIRHALDAGAAVMLMSHLGRPTEGEYAEEFSMKPVADRLSELLGQPVTLVKDYLGGADPAVGSVVLFENVRFNKGEKKDDEVLARQLAALCDVYVMDAFGTAHRAEASTHGVGKYAPTACAGLLLATELDALGRALHDPARPLVAIVGGSKVSTKLTVLDSLSQVVDQLIVGGGIANTFIKAAGFNVGKSLYEEDLVAEARRLMEAAKAKGGEIPVPVDVVVGKRFDAAEPAMVKSVADIAEDDMILDIGPETSRRYAEFIGRAGTVVWNGPVGVFEFDQFGEGTRRLGLAIAESHAFSIAGGGDTLAAIDKYGIADRISYISTGGGAFLEFLEGKQLPAVAMLESRAD.

Residues 21–23, Arg-36, 59–62, Arg-113, and Arg-146 contribute to the substrate site; these read DFN and HLGR. ATP-binding positions include Lys-197, Glu-319, and 345-348; that span reads GGDT.

Belongs to the phosphoglycerate kinase family. Monomer.

The protein localises to the cytoplasm. It catalyses the reaction (2R)-3-phosphoglycerate + ATP = (2R)-3-phospho-glyceroyl phosphate + ADP. It functions in the pathway carbohydrate degradation; glycolysis; pyruvate from D-glyceraldehyde 3-phosphate: step 2/5. In Methylococcus capsulatus (strain ATCC 33009 / NCIMB 11132 / Bath), this protein is Phosphoglycerate kinase.